The primary structure comprises 490 residues: ATP synthase subunit alpha 1 (490 aa).

171-178 is an ATP binding site; that stretch reads GDNGLGKS.

The protein belongs to the ATPase alpha/beta chains family. F-type ATPases have 2 components, CF(1) - the catalytic core - and CF(0) - the membrane proton channel. CF(1) has five subunits: alpha(3), beta(3), gamma(1), delta(1), epsilon(1). CF(0) has three main subunits: a(1), b(2) and c(9-12). The alpha and beta chains form an alternating ring which encloses part of the gamma chain. CF(1) is attached to CF(0) by a central stalk formed by the gamma and epsilon chains, while a peripheral stalk is formed by the delta and b chains.

Its subcellular location is the cell inner membrane. It catalyses the reaction ATP + H2O + 4 H(+)(in) = ADP + phosphate + 5 H(+)(out). Produces ATP from ADP in the presence of a proton gradient across the membrane. The alpha chain is a regulatory subunit. This is ATP synthase subunit alpha 1 from Legionella pneumophila (strain Corby).